The following is a 79-amino-acid chain: Putative membrane protein insertion efficiency factor (79 aa).

The protein belongs to the UPF0161 family.

It localises to the cell inner membrane. In terms of biological role, could be involved in insertion of integral membrane proteins into the membrane. This Rippkaea orientalis (strain PCC 8801 / RF-1) (Cyanothece sp. (strain PCC 8801)) protein is Putative membrane protein insertion efficiency factor.